The chain runs to 213 residues: Orotate phosphoribosyltransferase (213 aa).

Residue Lys26 coordinates 5-phospho-alpha-D-ribose 1-diphosphate. Position 34–35 (34–35 (FF)) interacts with orotate. Residues 72–73 (YK), Arg98, Lys99, Lys102, and 123–131 (DDVISAGTS) contribute to the 5-phospho-alpha-D-ribose 1-diphosphate site. Orotate-binding residues include Ser127 and Arg155.

The protein belongs to the purine/pyrimidine phosphoribosyltransferase family. PyrE subfamily. As to quaternary structure, homodimer. Requires Mg(2+) as cofactor.

The catalysed reaction is orotidine 5'-phosphate + diphosphate = orotate + 5-phospho-alpha-D-ribose 1-diphosphate. Its pathway is pyrimidine metabolism; UMP biosynthesis via de novo pathway; UMP from orotate: step 1/2. In terms of biological role, catalyzes the transfer of a ribosyl phosphate group from 5-phosphoribose 1-diphosphate to orotate, leading to the formation of orotidine monophosphate (OMP). This is Orotate phosphoribosyltransferase from Neisseria gonorrhoeae (strain ATCC 700825 / FA 1090).